The following is a 153-amino-acid chain: Small ribosomal subunit protein eS19 (153 aa).

Belongs to the eukaryotic ribosomal protein eS19 family. Part of the 30S ribosomal subunit.

May be involved in maturation of the 30S ribosomal subunit. The protein is Small ribosomal subunit protein eS19 of Aeropyrum pernix (strain ATCC 700893 / DSM 11879 / JCM 9820 / NBRC 100138 / K1).